We begin with the raw amino-acid sequence, 249 residues long: Triosephosphate isomerase (249 aa).

9-11 serves as a coordination point for substrate; that stretch reads NWK. The active-site Electrophile is H95. E166 acts as the Proton acceptor in catalysis. Residues G172, S211, and 232 to 233 contribute to the substrate site; that span reads GG.

This sequence belongs to the triosephosphate isomerase family. In terms of assembly, homodimer.

It is found in the cytoplasm. The enzyme catalyses D-glyceraldehyde 3-phosphate = dihydroxyacetone phosphate. Its pathway is carbohydrate biosynthesis; gluconeogenesis. It participates in carbohydrate degradation; glycolysis; D-glyceraldehyde 3-phosphate from glycerone phosphate: step 1/1. Involved in the gluconeogenesis. Catalyzes stereospecifically the conversion of dihydroxyacetone phosphate (DHAP) to D-glyceraldehyde-3-phosphate (G3P). The chain is Triosephosphate isomerase from Legionella pneumophila (strain Paris).